The sequence spans 139 residues: Low molecular weight protein-tyrosine-phosphatase PtpB (139 aa).

C7 serves as the catalytic Nucleophile. The active site involves R13. D111 serves as the catalytic Proton donor.

Belongs to the low molecular weight phosphotyrosine protein phosphatase family.

The catalysed reaction is O-phospho-L-tyrosyl-[protein] + H2O = L-tyrosyl-[protein] + phosphate. Its activity is regulated as follows. Inhibited by N-ethylmaleimide and sodium orthovanadate. In terms of biological role, dephosphorylates the phosphotyrosine-containing proteins. This is Low molecular weight protein-tyrosine-phosphatase PtpB (ptpB) from Staphylococcus aureus.